A 498-amino-acid polypeptide reads, in one-letter code: Cytochrome P450 71B24 (498 aa).

A helical membrane pass occupies residues 1–21 (MSILLYFIALLSLIIIKKIKD). Cys442 serves as a coordination point for heme.

This sequence belongs to the cytochrome P450 family. Heme is required as a cofactor.

The protein resides in the membrane. This Arabidopsis thaliana (Mouse-ear cress) protein is Cytochrome P450 71B24 (CYP71B24).